A 574-amino-acid polypeptide reads, in one-letter code: Membralin (574 aa).

The segment at 1–27 (MSEHAAAPGPGPNGGGGGGAAPVRGPR) is disordered. Ser-2 carries the post-translational modification N-acetylserine. Residues 69 to 89 (FFVLLKALFVLFVLAYIHIVF) traverse the membrane as a helical segment. An N-linked (GlcNAc...) asparagine glycan is attached at Asn-180. 3 helical membrane-spanning segments follow: residues 293 to 313 (TSYLAAFVIMVIFTLSVSMLL), 337 to 357 (IAFPAAPLLTVILALVGMEAI), and 417 to 437 (YSSLALVTSWLFIQHSMIYFF). 2 stretches are compositionally biased toward low complexity: residues 461–470 (LGPGTPTALP) and 491–501 (LGPSSSPAPTG). Disordered stretches follow at residues 461 to 515 (LGPG…GASV) and 546 to 574 (RRPTAPSTPDSSRPDPGVPLEDAPAPAGS).

This sequence belongs to the membralin family. Interacts with ERLIN2. In terms of tissue distribution, detected in brain, spinal cord, lung, liver and kidney.

It localises to the endoplasmic reticulum membrane. Its function is as follows. May have a role in the ERAD pathway required for clearance of misfolded proteins in the endoplasmic reticulum (ER). Promotes survival of motor neurons, probably by protecting against ER stress. The chain is Membralin (Tmem259) from Mus musculus (Mouse).